Consider the following 204-residue polypeptide: Small ribosomal subunit protein uS4 (204 aa).

The 63-residue stretch at 95–157 (RRLDNTVFRM…KGIHSIIRHN (63 aa)) folds into the S4 RNA-binding domain.

It belongs to the universal ribosomal protein uS4 family. As to quaternary structure, part of the 30S ribosomal subunit. Contacts protein S5. The interaction surface between S4 and S5 is involved in control of translational fidelity.

One of the primary rRNA binding proteins, it binds directly to 16S rRNA where it nucleates assembly of the body of the 30S subunit. Its function is as follows. With S5 and S12 plays an important role in translational accuracy. The protein is Small ribosomal subunit protein uS4 of Treponema pallidum (strain Nichols).